The primary structure comprises 1205 residues: cGMP-specific 3',5'-cyclic phosphodiesterase (1205 aa).

The segment at 1–153 (MTDVSSPAGG…TKASTTASQQ (153 aa)) is disordered. The segment covering 18 to 32 (TTSSSPAATTSASSS) has biased composition (low complexity). Over residues 33–48 (KPLTNGANKTTISTTA) the composition is skewed to polar residues. The span at 62-71 (GAIPASSSSG) shows a compositional bias: low complexity. A compositionally biased stretch (polar residues) spans 83–94 (SNNNRPAATNRS). The span at 118 to 140 (SSSSPSQSPSQTQASIQTQTSQQ) shows a compositional bias: low complexity. GAF domains lie at 259–411 (DIDV…GIGI) and 443–624 (NLEC…GLGI). A PDEase domain is found at 654–1052 (SQDQTEKLTQ…RNWQDLAEKV (399 aa)). His-730 functions as the Proton donor in the catalytic mechanism. A divalent metal cation-binding residues include His-734, His-770, Asp-771, and Asp-956. Disordered stretches follow at residues 1093-1122 (QQSQHGSEDSHTPEHQRSGSRLSMKKTGAL) and 1152-1205 (SHVS…CALL). 2 stretches are compositionally biased toward basic and acidic residues: residues 1098–1109 (GSEDSHTPEHQR) and 1152–1162 (SHVSEDMDDKS). Residues 1171–1191 (ASGSMGRMSASSSTSSAGGQM) are compositionally biased toward low complexity. Basic residues predominate over residues 1195-1205 (SKKRSKLCALL). Residue Cys-1202 is modified to Cysteine methyl ester. Cys-1202 is lipidated: S-farnesyl cysteine. The propeptide at 1203 to 1205 (ALL) is removed in mature form.

This sequence belongs to the cyclic nucleotide phosphodiesterase family. As to quaternary structure, interacts with PrBP. A divalent metal cation is required as a cofactor.

It is found in the cell membrane. The catalysed reaction is 3',5'-cyclic GMP + H2O = GMP + H(+). Functionally, has a role regulating cGMP transport in Malpighian tubule principal cells. The sequence is that of cGMP-specific 3',5'-cyclic phosphodiesterase from Drosophila sechellia (Fruit fly).